Reading from the N-terminus, the 257-residue chain is UPF0246 protein CV_1250 (257 aa).

The protein belongs to the UPF0246 family.

This chain is UPF0246 protein CV_1250, found in Chromobacterium violaceum (strain ATCC 12472 / DSM 30191 / JCM 1249 / CCUG 213 / NBRC 12614 / NCIMB 9131 / NCTC 9757 / MK).